We begin with the raw amino-acid sequence, 545 residues long: Glucans biosynthesis protein G (545 aa).

The N-terminal stretch at 1-34 is a signal peptide; the sequence is MVSLLRCQSFKPSSSLICSLALSAAFALSSSAFA. The tract at residues 38–60 is disordered; it reads KPAENKPATPVVSPPKATAQPAN.

Belongs to the OpgD/OpgG family.

It is found in the periplasm. The protein operates within glycan metabolism; osmoregulated periplasmic glucan (OPG) biosynthesis. In terms of biological role, involved in the biosynthesis of osmoregulated periplasmic glucans (OPGs). The sequence is that of Glucans biosynthesis protein G from Shewanella sp. (strain ANA-3).